The following is a 367-amino-acid chain: Serine/threonine-protein kinase-transforming protein Rmil (367 aa).

The tract at residues 1–64 (EGGSTAGLSA…DSSDDWEIPD (64 aa)) is disordered. The segment covering 33–57 (QRERKSSSSSEDRNRMKTLGRRDSS) has biased composition (basic and acidic residues). Residues 67–327 (ITVGQRIGSG…PQILASIELL (261 aa)) form the Protein kinase domain. ATP contacts are provided by residues 73 to 81 (IGSGSFGTV) and Lys93. Asp186 serves as the catalytic Proton acceptor.

This sequence belongs to the protein kinase superfamily. TKL Ser/Thr protein kinase family. RAF subfamily.

The catalysed reaction is L-seryl-[protein] + ATP = O-phospho-L-seryl-[protein] + ADP + H(+). It carries out the reaction L-threonyl-[protein] + ATP = O-phospho-L-threonyl-[protein] + ADP + H(+). The protein is Serine/threonine-protein kinase-transforming protein Rmil (V-RMIL) of Avian retrovirus IC10.